A 480-amino-acid chain; its full sequence is Glycogen synthase (480 aa).

Lys-15 lines the ADP-alpha-D-glucose pocket.

Belongs to the glycosyltransferase 1 family. Bacterial/plant glycogen synthase subfamily.

It carries out the reaction [(1-&gt;4)-alpha-D-glucosyl](n) + ADP-alpha-D-glucose = [(1-&gt;4)-alpha-D-glucosyl](n+1) + ADP + H(+). The protein operates within glycan biosynthesis; glycogen biosynthesis. Its function is as follows. Synthesizes alpha-1,4-glucan chains using ADP-glucose. This is Glycogen synthase from Rhizobium johnstonii (strain DSM 114642 / LMG 32736 / 3841) (Rhizobium leguminosarum bv. viciae).